The chain runs to 307 residues: Olfactory receptor 5M3 (307 aa).

Over Met-1 to Val-23 the chain is Extracellular. Asn-3 is a glycosylation site (N-linked (GlcNAc...) asparagine). Residues Leu-24–Met-44 traverse the membrane as a helical segment. At Val-45–Gln-52 the chain is on the cytoplasmic side. A helical membrane pass occupies residues Leu-53–Ser-73. Over Asn-74 to Val-97 the chain is Extracellular. The cysteines at positions 95 and 187 are disulfide-linked. A helical transmembrane segment spans residues Gln-98–Phe-118. The Cytoplasmic portion of the chain corresponds to Asp-119–Val-137. Residues Val-138–Thr-158 form a helical membrane-spanning segment. Residues Leu-159–Glu-194 are Extracellular-facing. A helical transmembrane segment spans residues Tyr-195–Ser-215. At Tyr-216–Ala-235 the chain is on the cytoplasmic side. The helical transmembrane segment at Phe-236 to Met-256 threads the bilayer. Over Tyr-257–Gly-269 the chain is Extracellular. Residues Lys-270 to Leu-290 traverse the membrane as a helical segment. The Cytoplasmic portion of the chain corresponds to Arg-291–Cys-307.

The protein belongs to the G-protein coupled receptor 1 family.

The protein localises to the cell membrane. Odorant receptor. The protein is Olfactory receptor 5M3 (OR5M3) of Homo sapiens (Human).